Reading from the N-terminus, the 252-residue chain is Neurexophilin-3 (252 aa).

The first 22 residues, methionine 1–glycine 22, serve as a signal peptide directing secretion. Residues glutamine 23 to valine 75 are II. Positions proline 27–proline 59 are disordered. Positions arginine 45–proline 55 are enriched in basic residues. 4 N-linked (GlcNAc...) asparagine glycosylation sites follow: asparagine 62, asparagine 127, asparagine 137, and asparagine 143. The III stretch occupies residues tryptophan 76–phenylalanine 157. Positions histidine 158–glutamate 166 are IV (linker domain). A v (Cys-rich) region spans residues alanine 167–glycine 252.

Belongs to the neurexophilin family. Post-translationally, may be proteolytically processed at the boundary between the N-terminal non-conserved and the central conserved domain in neuron-like cells. Highest level in brain, present also in lung, kidney and testis.

The protein resides in the secreted. Functionally, may be signaling molecules that resemble neuropeptides. Ligand for alpha-neurexins. The chain is Neurexophilin-3 (Nxph3) from Mus musculus (Mouse).